An 87-amino-acid chain; its full sequence is Small ribosomal subunit protein uS17 (87 aa).

Belongs to the universal ribosomal protein uS17 family. Part of the 30S ribosomal subunit.

Its function is as follows. One of the primary rRNA binding proteins, it binds specifically to the 5'-end of 16S ribosomal RNA. The chain is Small ribosomal subunit protein uS17 from Bacillus pumilus (strain SAFR-032).